A 194-amino-acid polypeptide reads, in one-letter code: Imidazoleglycerol-phosphate dehydratase (194 aa).

It belongs to the imidazoleglycerol-phosphate dehydratase family.

It is found in the cytoplasm. The catalysed reaction is D-erythro-1-(imidazol-4-yl)glycerol 3-phosphate = 3-(imidazol-4-yl)-2-oxopropyl phosphate + H2O. It functions in the pathway amino-acid biosynthesis; L-histidine biosynthesis; L-histidine from 5-phospho-alpha-D-ribose 1-diphosphate: step 6/9. The protein is Imidazoleglycerol-phosphate dehydratase of Bacillus cereus (strain B4264).